The following is a 119-amino-acid chain: Protein TusC (119 aa).

It belongs to the DsrF/TusC family. Heterohexamer, formed by a dimer of trimers. The hexameric TusBCD complex contains 2 copies each of TusB, TusC and TusD. The TusBCD complex interacts with TusE.

It is found in the cytoplasm. Part of a sulfur-relay system required for 2-thiolation of 5-methylaminomethyl-2-thiouridine (mnm(5)s(2)U) at tRNA wobble positions. The protein is Protein TusC of Escherichia coli O127:H6 (strain E2348/69 / EPEC).